A 435-amino-acid chain; its full sequence is UPF0053 protein Rv2366c (435 aa).

The CNNM transmembrane domain maps to 1 to 185 (MTGYYQLLGS…QQRGVVAADE (185 aa)). 2 helical membrane-spanning segments follow: residues 7 to 27 (LLGS…DAAI) and 89 to 109 (VWGL…VVGV). 2 consecutive CBS domains span residues 204-267 (MVPR…GRET) and 272-329 (VMRP…IADE).

The protein belongs to the UPF0053 family.

It localises to the cell membrane. In Mycobacterium tuberculosis (strain ATCC 25618 / H37Rv), this protein is UPF0053 protein Rv2366c.